Reading from the N-terminus, the 287-residue chain is Protein TMEPAI (287 aa).

At 1–40 (MHRLMGVNSTAAAAAGQPNVSCTCNCKRSLFQSMEITELE) the chain is on the lumenal side. The chain crosses the membrane as a helical span at residues 41–63 (FVQIIIIVVVMMVMVVVITCLLS). Topologically, residues 64 to 287 (HYKLSARSFI…EKDKQKGHPL (224 aa)) are cytoplasmic. Residues 158 to 161 (PPPY) carry the PPxY motif 1 motif. The short motif at 186–189 (PPNR) is the SMAD interaction motif (SIM) element. The short motif at 229 to 232 (PPTY) is the PPxY motif 2 element. The segment at 239-258 (YPGSSFQHQQSSGPPSLLEG) is disordered. The span at 242–252 (SSFQHQQSSGP) shows a compositional bias: polar residues.

The protein belongs to the PMEPA1 family. In terms of assembly, interacts with NEDD4 (via PPxY motifs). Interacts with AR. Interacts with LDLRAD4. Interacts (via the SMAD interaction motif) with SMAD2 and SMAD3. As to expression, highest expression in prostate. Also expressed in ovary.

The protein localises to the early endosome membrane. It localises to the golgi apparatus membrane. Functions as a negative regulator of TGF-beta signaling and thereby probably plays a role in cell proliferation, differentiation, apoptosis, motility, extracellular matrix production and immunosuppression. In the canonical TGF-beta pathway, ZFYVE9/SARA recruits the intracellular signal transducer and transcriptional modulators SMAD2 and SMAD3 to the TGF-beta receptor. Phosphorylated by the receptor, SMAD2 and SMAD3 then form a heteromeric complex with SMAD4 that translocates to the nucleus to regulate transcription. Through interaction with SMAD2 and SMAD3, LDLRAD4 may compete with ZFYVE9 and SMAD4 and prevent propagation of the intracellular signal. Also involved in down-regulation of the androgen receptor (AR), enhancing ubiquitination and proteasome-mediated degradation of AR, probably by recruiting NEDD4. This chain is Protein TMEPAI (PMEPA1), found in Homo sapiens (Human).